The chain runs to 550 residues: Leucine-rich repeat LGI family member 2 (550 aa).

Residues 1-25 (MALWRGGGALGLLLLSAACLIPPSA) form the signal peptide. The LRRNT domain occupies 26–62 (QVRRLARCPATCSCTKESIICVGSSWVPRIVPGDISS). An N-linked (GlcNAc...) asparagine glycan is attached at asparagine 67. 2 LRR repeats span residues 83–104 (SLQL…AFAG) and 107–128 (HLEY…AFRG). The 51-residue stretch at 140-190 (NKFECDCKAKWLYLWLKMTNSTVSDVLCIGPPEYQEKKLNEVTSFDYECTT) folds into the LRRCT domain. Asparagine 159 is a glycosylation site (N-linked (GlcNAc...) asparagine). EAR repeat units lie at residues 224–266 (DFVV…EWDH), 270–312 (NFRS…KYDE), 316–363 (KFVK…KWNS), 365–408 (GFYS…QWNK), 412–455 (KFVP…RWNS), 457–499 (QFVE…QWDK), and 503–545 (QFKK…EHII). Asparagine 276 carries N-linked (GlcNAc...) asparagine glycosylation. Asparagine 407 carries an N-linked (GlcNAc...) asparagine glycan.

As to expression, brain.

The protein localises to the secreted. Required for the development of soma-targeting inhibitory GABAergic synapses made by parvalbumin-positive basket cells. The chain is Leucine-rich repeat LGI family member 2 (Lgi2) from Mus musculus (Mouse).